The primary structure comprises 541 residues: Phosphoenolpyruvate carboxykinase (ATP) (541 aa).

3 residues coordinate substrate: R67, Y207, and K213. Residues K213, H232, and 248-256 (GLSGTGKTT) contribute to the ATP site. K213 and H232 together coordinate Mn(2+). D269 serves as a coordination point for Mn(2+). ATP contacts are provided by residues E297, R333, 449 to 450 (RI), and T455. Residue R333 participates in substrate binding.

It belongs to the phosphoenolpyruvate carboxykinase (ATP) family. Monomer. Mn(2+) serves as cofactor.

It is found in the cytoplasm. It catalyses the reaction oxaloacetate + ATP = phosphoenolpyruvate + ADP + CO2. It participates in carbohydrate biosynthesis; gluconeogenesis. Involved in the gluconeogenesis. Catalyzes the conversion of oxaloacetate (OAA) to phosphoenolpyruvate (PEP) through direct phosphoryl transfer between the nucleoside triphosphate and OAA. The protein is Phosphoenolpyruvate carboxykinase (ATP) of Aliivibrio salmonicida (strain LFI1238) (Vibrio salmonicida (strain LFI1238)).